Here is a 345-residue protein sequence, read N- to C-terminus: 3-isopropylmalate dehydrogenase (345 aa).

Position 76–87 (76–87 (GPKYDNAPVRPE)) interacts with NAD(+). Substrate-binding residues include arginine 94, arginine 104, arginine 132, and aspartate 216. The Mg(2+) site is built by aspartate 216, aspartate 240, and aspartate 244. NAD(+) is bound at residue 274 to 286 (GSAPDIAGQGIAN).

This sequence belongs to the isocitrate and isopropylmalate dehydrogenases family. LeuB type 1 subfamily. As to quaternary structure, homodimer. Mg(2+) is required as a cofactor. Requires Mn(2+) as cofactor.

Its subcellular location is the cytoplasm. The enzyme catalyses (2R,3S)-3-isopropylmalate + NAD(+) = 4-methyl-2-oxopentanoate + CO2 + NADH. The protein operates within amino-acid biosynthesis; L-leucine biosynthesis; L-leucine from 3-methyl-2-oxobutanoate: step 3/4. Its function is as follows. Catalyzes the oxidation of 3-carboxy-2-hydroxy-4-methylpentanoate (3-isopropylmalate) to 3-carboxy-4-methyl-2-oxopentanoate. The product decarboxylates to 4-methyl-2 oxopentanoate. This is 3-isopropylmalate dehydrogenase from Streptococcus thermophilus (strain CNRZ 1066).